We begin with the raw amino-acid sequence, 178 residues long: Cytochrome b6-f complex iron-sulfur subunit (178 aa).

The helical transmembrane segment at 20-42 (LLTFGTATGVALGALYPVANYFM) threads the bilayer. The 97-residue stretch at 65–161 (KTGWLASHQA…VDVDDDAVLV (97 aa)) folds into the Rieske domain. [2Fe-2S] cluster contacts are provided by Cys107, His109, Cys125, and His128. Cysteines 112 and 127 form a disulfide.

It belongs to the Rieske iron-sulfur protein family. The 4 large subunits of the cytochrome b6-f complex are cytochrome b6, subunit IV (17 kDa polypeptide, PetD), cytochrome f and the Rieske protein, while the 4 small subunits are PetG, PetL, PetM and PetN. The complex functions as a dimer. [2Fe-2S] cluster serves as cofactor.

It is found in the cellular thylakoid membrane. It carries out the reaction 2 oxidized [plastocyanin] + a plastoquinol + 2 H(+)(in) = 2 reduced [plastocyanin] + a plastoquinone + 4 H(+)(out). In terms of biological role, component of the cytochrome b6-f complex, which mediates electron transfer between photosystem II (PSII) and photosystem I (PSI), cyclic electron flow around PSI, and state transitions. The polypeptide is Cytochrome b6-f complex iron-sulfur subunit (Prochlorococcus marinus subsp. pastoris (strain CCMP1986 / NIES-2087 / MED4)).